A 424-amino-acid chain; its full sequence is Histidine--tRNA ligase (424 aa).

A disordered region spans residues 1-22 (MSYRRPKGTYDVYPGDAARQEP).

It belongs to the class-II aminoacyl-tRNA synthetase family. In terms of assembly, homodimer.

It is found in the cytoplasm. The catalysed reaction is tRNA(His) + L-histidine + ATP = L-histidyl-tRNA(His) + AMP + diphosphate + H(+). The polypeptide is Histidine--tRNA ligase (Rubrobacter xylanophilus (strain DSM 9941 / JCM 11954 / NBRC 16129 / PRD-1)).